The primary structure comprises 151 residues: Probable transcriptional regulator syrB3 (151 aa).

The tract at residues 1–65 (MVDESNAGPV…QERSEKLRLI (65 aa)) is disordered. Over residues 7 to 23 (AGPVAPAVVADAEVKAP) the composition is skewed to low complexity. Positions 52 to 65 (GYSEQERSEKLRLI) are enriched in basic and acidic residues.

The protein belongs to the SyrB family.

This is Probable transcriptional regulator syrB3 (syrB3) from Rhizobium meliloti (strain 1021) (Ensifer meliloti).